The primary structure comprises 36 residues: Tddefensin (36 aa).

Intrachain disulfides connect cysteine 3-cysteine 24, cysteine 10-cysteine 32, and cysteine 14-cysteine 34.

The protein belongs to the invertebrate defensin family. As to expression, expressed by the venom gland.

It localises to the secreted. Functionally, antibacterial peptide mostly active against Gram-positive bacteria. This is Tddefensin from Tityus discrepans (Venezuelan scorpion).